The primary structure comprises 145 residues: MLTAEEKAAVTAFWGKVHVDEVGGEALGRLLVVYPWTQRFFESFGDLSTADAVMNNPKVKAHGKKVLDSFSDGMKHLDDLKGTFAALSELHCDKLHVDPENFKLLGNVLVVVLARNFGKEFTPVLQADFQKVVAGVANALAHRYH.

The Globin domain maps to 1 to 145; sequence MLTAEEKAAV…VANALAHRYH (145 aa). Residues His-62 and His-91 each coordinate heme b.

Belongs to the globin family. As to quaternary structure, heterotetramer of two alpha chains and two beta chains. As to expression, red blood cells.

Its function is as follows. Involved in oxygen transport from the lung to the various peripheral tissues. This is Hemoglobin subunit beta-A from Bos javanicus (Wild banteng).